The chain runs to 82 residues: ATP synthase subunit c, chloroplastic (82 aa).

Helical transmembrane passes span 3–23 (PLIA…AAIG) and 57–77 (FAFM…LLFA).

The protein belongs to the ATPase C chain family. As to quaternary structure, F-type ATPases have 2 components, F(1) - the catalytic core - and F(0) - the membrane proton channel. F(1) has five subunits: alpha(3), beta(3), gamma(1), delta(1), epsilon(1). F(0) has four main subunits: a(1), b(1), b'(1) and c(10-14). The alpha and beta chains form an alternating ring which encloses part of the gamma chain. F(1) is attached to F(0) by a central stalk formed by the gamma and epsilon chains, while a peripheral stalk is formed by the delta, b and b' chains.

The protein localises to the plastid. Its subcellular location is the chloroplast thylakoid membrane. F(1)F(0) ATP synthase produces ATP from ADP in the presence of a proton or sodium gradient. F-type ATPases consist of two structural domains, F(1) containing the extramembraneous catalytic core and F(0) containing the membrane proton channel, linked together by a central stalk and a peripheral stalk. During catalysis, ATP synthesis in the catalytic domain of F(1) is coupled via a rotary mechanism of the central stalk subunits to proton translocation. Functionally, key component of the F(0) channel; it plays a direct role in translocation across the membrane. A homomeric c-ring of between 10-14 subunits forms the central stalk rotor element with the F(1) delta and epsilon subunits. This Oltmannsiellopsis viridis (Marine flagellate) protein is ATP synthase subunit c, chloroplastic.